We begin with the raw amino-acid sequence, 361 residues long: tRNA-specific 2-thiouridylase MnmA (361 aa).

ATP contacts are provided by residues 8-15 (GMSGGVDS) and Met-34. The segment at 94-96 (NPD) is interaction with target base in tRNA. Catalysis depends on Cys-99, which acts as the Nucleophile. A disulfide bond links Cys-99 and Cys-195. Gly-123 provides a ligand contact to ATP. The segment at 145 to 147 (KDQ) is interaction with tRNA. Cys-195 acts as the Cysteine persulfide intermediate in catalysis. Residues 307 to 308 (RY) form an interaction with tRNA region.

This sequence belongs to the MnmA/TRMU family.

It localises to the cytoplasm. It catalyses the reaction S-sulfanyl-L-cysteinyl-[protein] + uridine(34) in tRNA + AH2 + ATP = 2-thiouridine(34) in tRNA + L-cysteinyl-[protein] + A + AMP + diphosphate + H(+). Functionally, catalyzes the 2-thiolation of uridine at the wobble position (U34) of tRNA, leading to the formation of s(2)U34. The protein is tRNA-specific 2-thiouridylase MnmA of Legionella pneumophila (strain Lens).